Reading from the N-terminus, the 147-residue chain is Protein archease (147 aa).

Residues D17, D146, and I147 each contribute to the Ca(2+) site.

The protein belongs to the archease family.

Functionally, activates the tRNA-splicing ligase complex by facilitating the enzymatic turnover of catalytic subunit RtcB. Acts by promoting the guanylylation of RtcB, a key intermediate step in tRNA ligation. Can also alter the NTP specificity of RtcB such that ATP, dGTP or ITP is used efficiently. This chain is Protein archease, found in Pyrobaculum neutrophilum (strain DSM 2338 / JCM 9278 / NBRC 100436 / V24Sta) (Thermoproteus neutrophilus).